A 781-amino-acid chain; its full sequence is Homeobox protein SIX4 (781 aa).

A compositionally biased stretch (polar residues) spans 1–10 (MSSSSPTGQI). Disordered stretches follow at residues 1 to 55 (MSSS…PLEP) and 270 to 321 (WFKN…GITN). S2 is modified (N-acetylserine). The homeobox DNA-binding region spans 223 to 282 (GEETVYCFKEKSRNALKELYKQNRYPSPAEKRHLAKITGLSLTQVSNWFKNRRQRDRNPS). Basic and acidic residues-rich tracts occupy residues 278–290 (DRNP…KSES) and 299–308 (ESSKGHEDLS). S640 is subject to Phosphoserine.

This sequence belongs to the SIX/Sine oculis homeobox family. As to quaternary structure, interacts with EYA3; acts cooperatively with EYA3 to transactivate target genes through interaction and nuclear translocation of EYA3 protein.

Its subcellular location is the nucleus. It is found in the cytoplasm. Transcriptional regulator which can act as both a transcriptional repressor and activator by binding a DNA sequence on these target genes and is involved in processes like cell differentiation, cell migration and cell survival. Transactivates gene expression by binding a 5'-[CAT]A[CT][CT][CTG]GA[GAT]-3' motif present in the Trex site and a 5'-TCA[AG][AG]TTNC-3' motif present in the MEF3 site of the muscle-specific genes enhancer. Acts cooperatively with EYA proteins to transactivate their target genes through interaction and nuclear translocation of EYA protein. Acts synergistically with SIX1 to regulate target genes involved in formation of various organs, including muscle, kidney, gonad, ganglia, olfactory epithelium and cranial skeleton. Plays a role in several important steps of muscle development. Controls the genesis of hypaxial myogenic progenitors in the dermomyotome by transactivating PAX3 and the delamination and migration of the hypaxial precursors from the ventral lip to the limb buds through the transactivation of PAX3, MET and LBX1. Controls myoblast determination by transactivating MYF5, MYOD1 and MYF6. Controls somitic differentiation in myocyte through MYOG transactivation. Plays a role in synaptogenesis and sarcomere organization by participating in myofiber specialization during embryogenesis by activating fast muscle program in the primary myotome resulting in an up-regulation of fast muscle genes, including ATP2A1, MYL1 and TNNT3. Simultaneously, is also able to activate inhibitors of slow muscle genes, such as SOX6, HRASLS, and HDAC4, thereby restricting the activation of the slow muscle genes. During muscle regeneration, negatively regulates differentiation of muscle satellite cells through down-regulation of MYOG expression. During kidney development regulates the early stages of metanephros development and ureteric bud formation through regulation of GDNF, SALL1, PAX8 and PAX2 expression. Plays a role in gonad development by regulating both testis determination and size determination. In gonadal sex determination, transactivates ZFPM2 by binding a MEF3 consensus sequence, resulting in SRY up-regulation. In gonadal size determination, transactivates NR5A1 by binding a MEF3 consensus sequence resulting in gonadal precursor cell formation regulation. During olfactory development mediates the specification and patterning of olfactory placode through fibroblast growth factor and BMP4 signaling pathways and also regulates epithelial cell proliferation during placode formation. Promotes survival of sensory neurons during early trigeminal gangliogenesis. In the developing dorsal root ganglia, up-regulates SLC12A2 transcription. Regulates early thymus/parathyroid organogenesis through regulation of GCM2 and FOXN1 expression. Forms gustatory papillae during development of the tongue. Also plays a role during embryonic cranial skeleton morphogenesis. The chain is Homeobox protein SIX4 (SIX4) from Homo sapiens (Human).